The sequence spans 450 residues: Tripartite motif-containing protein 64C (450 aa).

The segment at 15-56 (CCICVNYFIDPVTTDCVHSFCRPCLCLCSEEGRAPMRCPLCR) adopts an RING-type zinc-finger fold. A B box-type zinc finger spans residues 87 to 128 (SSDNICVLHEETKELFCEADKRLLCGPCSESPEHMAHSHSPI). C92, H95, C114, and H120 together coordinate Zn(2+). Residues 191-218 (DEEEQRHLQALEREAKELFQQLQDSQVR) adopt a coiled-coil conformation. A B30.2/SPRY domain is found at 269 to 450 (ELTSWCITGV…LRPFFCFGCT (182 aa)).

Belongs to the TRIM/RBCC family.

The protein is Tripartite motif-containing protein 64C (TRIM64C) of Homo sapiens (Human).